A 369-amino-acid chain; its full sequence is 4-hydroxy-3-methylbut-2-en-1-yl diphosphate synthase (flavodoxin) (369 aa).

Residues Cys-270, Cys-273, Cys-305, and Glu-312 each coordinate [4Fe-4S] cluster.

Belongs to the IspG family. [4Fe-4S] cluster serves as cofactor.

It carries out the reaction (2E)-4-hydroxy-3-methylbut-2-enyl diphosphate + oxidized [flavodoxin] + H2O + 2 H(+) = 2-C-methyl-D-erythritol 2,4-cyclic diphosphate + reduced [flavodoxin]. It functions in the pathway isoprenoid biosynthesis; isopentenyl diphosphate biosynthesis via DXP pathway; isopentenyl diphosphate from 1-deoxy-D-xylulose 5-phosphate: step 5/6. Converts 2C-methyl-D-erythritol 2,4-cyclodiphosphate (ME-2,4cPP) into 1-hydroxy-2-methyl-2-(E)-butenyl 4-diphosphate. This chain is 4-hydroxy-3-methylbut-2-en-1-yl diphosphate synthase (flavodoxin), found in Pseudomonas putida (strain GB-1).